Consider the following 306-residue polypeptide: tRNA pseudouridine synthase B (306 aa).

Catalysis depends on Asp-48, which acts as the Nucleophile.

It belongs to the pseudouridine synthase TruB family. Type 1 subfamily.

It catalyses the reaction uridine(55) in tRNA = pseudouridine(55) in tRNA. Its function is as follows. Responsible for synthesis of pseudouridine from uracil-55 in the psi GC loop of transfer RNAs. The protein is tRNA pseudouridine synthase B of Ectopseudomonas mendocina (strain ymp) (Pseudomonas mendocina).